Here is a 393-residue protein sequence, read N- to C-terminus: Isocitrate dehydrogenase [NAD] subunit gamma, mitochondrial (393 aa).

A mitochondrion-targeting transit peptide spans 1–39 (MALKVATVAGSAAKAVLGPALLCRPWEVLGAHEVPSRNI). Citrate is bound by residues T120 and N133. R136, R167, and D254 together coordinate substrate. D254 provides a ligand contact to Mn(2+). Positions 312, 313, and 324 each coordinate ADP.

It belongs to the isocitrate and isopropylmalate dehydrogenases family. As to quaternary structure, heterooligomer of subunits alpha (IDH3A), beta (IDH3B), and gamma (IDH3G) in the apparent ratio of 2:1:1. The heterodimer containing one IDH3A and one IDH3B subunit and the heterodimer containing one IDH3A and one IDH3G subunit assemble into a heterotetramer (which contains two subunits of IDH3A, one of IDH3B and one of IDH3G) and further into the heterooctamer. It depends on Mg(2+) as a cofactor. The cofactor is Mn(2+).

The protein resides in the mitochondrion. The heterotetramer and the heterodimer composed of IDH3A and IDH3G subunits can be allosterically activated by citrate (CIT) or/and ADP, and the two activators can act independently or synergistically. The heterodimer composed of IDH3A and IDH3B subunits cannot be allosterically regulated and the allosteric regulation of the heterotetramer is through the IDH3G subunit and not the IDH3B subunit. The IDH3G subunit contains the allosteric site which consists of a CIT-binding site and an ADP-binding site, and the binding of CIT and ADP causes conformational changes at the allosteric site which are transmitted to the active site in the catalytic subunit (IDH3A) through a cascade of conformational changes at the heterodimer interface, leading to stabilization of the isocitrate-binding at the active site and thus activation of the enzyme. ATP can activate the heterotetramer and the heterodimer composed of IDH3A and IDH3G subunits at low concentrations but inhibits their activities at high concentrations, whereas ATP exhibits only inhibitory effect on the heterodimer composed of IDH3A and IDH3B subunits. Regulatory subunit which plays a role in the allosteric regulation of the enzyme catalyzing the decarboxylation of isocitrate (ICT) into alpha-ketoglutarate. The heterodimer composed of the alpha (IDH3A) and beta (IDH3B) subunits and the heterodimer composed of the alpha (IDH3A) and gamma (IDH3G) subunits, have considerable basal activity but the full activity of the heterotetramer (containing two subunits of IDH3A, one of IDH3B and one of IDH3G) requires the assembly and cooperative function of both heterodimers. This is Isocitrate dehydrogenase [NAD] subunit gamma, mitochondrial (IDH3G) from Homo sapiens (Human).